A 346-amino-acid chain; its full sequence is [LysW]-lysine/[LysW]-ornithine hydrolase (346 aa).

Histidine 68 provides a ligand contact to Zn(2+). Aspartate 70 is a catalytic residue. Residue aspartate 92 coordinates Zn(2+). The Proton acceptor role is filled by glutamate 122. Zn(2+) is bound by residues glutamate 123, glutamate 146, and histidine 317.

It belongs to the peptidase M20A family. LysK subfamily. Zn(2+) serves as cofactor. Requires Co(2+) as cofactor.

It localises to the cytoplasm. The catalysed reaction is [amino-group carrier protein]-C-terminal-gamma-(L-lysyl)-L-glutamate + H2O = [amino-group carrier protein]-C-terminal-L-glutamate + L-lysine. It carries out the reaction [amino-group carrier protein]-C-terminal-gamma-(L-ornithyl)-L-glutamate + H2O = [amino-group carrier protein]-C-terminal-L-glutamate + L-ornithine. It functions in the pathway amino-acid biosynthesis; L-lysine biosynthesis via AAA pathway; L-lysine from L-alpha-aminoadipate (Thermus route): step 5/5. The protein operates within amino-acid biosynthesis; L-arginine biosynthesis. In terms of biological role, catalyzes the release of L-lysine from [LysW]-gamma-L-lysine and the release of L-ornithine from [LysW]-L-ornithine. The sequence is that of [LysW]-lysine/[LysW]-ornithine hydrolase from Saccharolobus islandicus (strain Y.N.15.51 / Yellowstone #2) (Sulfolobus islandicus).